Reading from the N-terminus, the 231-residue chain is 5'-methylthioadenosine/S-adenosylhomocysteine nucleosidase (231 aa).

Catalysis depends on Glu-12, which acts as the Proton acceptor. Residues Gly-78, Val-153, and Met-174–Glu-175 contribute to the substrate site. The Proton donor role is filled by Asp-198.

It belongs to the PNP/UDP phosphorylase family. MtnN subfamily.

The catalysed reaction is S-adenosyl-L-homocysteine + H2O = S-(5-deoxy-D-ribos-5-yl)-L-homocysteine + adenine. It catalyses the reaction S-methyl-5'-thioadenosine + H2O = 5-(methylsulfanyl)-D-ribose + adenine. The enzyme catalyses 5'-deoxyadenosine + H2O = 5-deoxy-D-ribose + adenine. Its pathway is amino-acid biosynthesis; L-methionine biosynthesis via salvage pathway; S-methyl-5-thio-alpha-D-ribose 1-phosphate from S-methyl-5'-thioadenosine (hydrolase route): step 1/2. Functionally, catalyzes the irreversible cleavage of the glycosidic bond in both 5'-methylthioadenosine (MTA) and S-adenosylhomocysteine (SAH/AdoHcy) to adenine and the corresponding thioribose, 5'-methylthioribose and S-ribosylhomocysteine, respectively. Also cleaves 5'-deoxyadenosine, a toxic by-product of radical S-adenosylmethionine (SAM) enzymes, into 5-deoxyribose and adenine. The chain is 5'-methylthioadenosine/S-adenosylhomocysteine nucleosidase from Aliivibrio fischeri (Vibrio fischeri).